Consider the following 160-residue polypeptide: Eosinophil cationic protein (160 aa).

An N-terminal signal peptide occupies residues 1 to 27 (MVPKLFTSQICLLLLLGLMGVEGSLHA). The required for nearly all of the bactericidal activity; partially involved in LPS-binding and bacterial membrane depolarization stretch occupies residues 28–72 (RPPQFTRAQWFAIQHISLNPPRCTIAMRAINNYRWRCKNQNTFLR). Catalysis depends on His42, which acts as the Proton acceptor. Intrachain disulfides connect Cys50–Cys110, Cys64–Cys123, Cys82–Cys138, and Cys89–Cys98. Tyr60 is subject to 3'-nitrotyrosine. 65 to 69 (KNQNT) contributes to the substrate binding site. 3 N-linked (GlcNAc...) asparagine glycosylation sites follow: Asn84, Asn92, and Asn119. The active-site Proton donor is the His155.

This sequence belongs to the pancreatic ribonuclease family. As to quaternary structure, interacts with bacterial lipopolysaccharide (LPS) and lipoteichoic acid (LTA). In vitro interacts with and insert into lipid bilayers composed of dioleoyl phosphatidylcholine and dioleoyl phosphatidylglycerol. In vitro, tends to form amyloid-like aggregates at pH 3, but not at pH 5, nor 7.

It localises to the secreted. Its function is as follows. Cytotoxin and helminthotoxin with low-efficiency ribonuclease activity. Possesses a wide variety of biological activities. Exhibits antibacterial activity, including cytoplasmic membrane depolarization of preferentially Gram-negative, but also Gram-positive strains. Promotes E.coli outer membrane detachment, alteration of the overall cell shape and partial loss of cell content. The protein is Eosinophil cationic protein (RNASE3) of Homo sapiens (Human).